A 156-amino-acid chain; its full sequence is Small ribosomal subunit protein uS7 (156 aa).

This sequence belongs to the universal ribosomal protein uS7 family. As to quaternary structure, part of the 30S ribosomal subunit. Contacts proteins S9 and S11.

One of the primary rRNA binding proteins, it binds directly to 16S rRNA where it nucleates assembly of the head domain of the 30S subunit. Is located at the subunit interface close to the decoding center, probably blocks exit of the E-site tRNA. The polypeptide is Small ribosomal subunit protein uS7 (Prochlorococcus marinus (strain NATL2A)).